Reading from the N-terminus, the 99-residue chain is Malonate decarboxylase acyl carrier protein (99 aa).

Ser25 carries the O-(phosphoribosyl dephospho-coenzyme A)serine modification.

It belongs to the MdcC family. Covalently binds the prosthetic group of malonate decarboxylase.

Its subcellular location is the cytoplasm. In terms of biological role, subunit of malonate decarboxylase, it is an acyl carrier protein to which acetyl and malonyl thioester residues are bound via a 2'-(5''-phosphoribosyl)-3'-dephospho-CoA prosthetic group and turn over during the catalytic mechanism. The polypeptide is Malonate decarboxylase acyl carrier protein (Pseudomonas aeruginosa (strain LESB58)).